The chain runs to 358 residues: MAAMVVGALRRGTATAGGSSRSFARSLPRPVSTLVVAEHEGGFVKPSSLSALAAAEAIGKDDNRVSLLLGGSGPGLHKAAEHAASSHPLVSEVLVADSDVFAHPLAEPWAELLRSVQHKGGYSHVIASSTSFGKNLLPRAAALLDVSPVTDVTSISEPRVFVRPIYAGNALCTVRYTGEDPCMMSIRSTSFSPTEAMSEAKVAPITQVDLSFLSEGSSGKSAWVNLKSQDTERPDLANAPVVVTGGRGLKSAENFKVLEQLAEKLGAAVGATRAAVDAGFVPNELQVGQTGKIVAPELYMAFGVSGAIQHLAGMRDSKVIVAVNKDADAPIFQVADYGIVADLFEVLDELLKKLPDKK.

FAD is bound at residue Leu298 to Asp326.

It belongs to the ETF alpha-subunit/FixB family. As to quaternary structure, heterodimer of an alpha and a beta subunit. Requires FAD as cofactor.

The protein localises to the mitochondrion matrix. Functionally, the electron transfer flavoprotein serves as a specific electron acceptor for several dehydrogenases, including five acyl-CoA dehydrogenases, glutaryl-CoA and sarcosine dehydrogenase. It transfers the electrons to the main mitochondrial respiratory chain via ETF-ubiquinone oxidoreductase (ETF dehydrogenase). The sequence is that of Electron transfer flavoprotein subunit alpha, mitochondrial (ETFA) from Oryza sativa subsp. indica (Rice).